A 136-amino-acid polypeptide reads, in one-letter code: Small ribosomal subunit protein uS19 (136 aa).

Positions 114 to 136 (RSRVSHGSAGVGATRSSKFVPLK) are disordered.

The protein belongs to the universal ribosomal protein uS19 family.

Its function is as follows. Protein S19 forms a complex with S13 that binds strongly to the 16S ribosomal RNA. The polypeptide is Small ribosomal subunit protein uS19 (Methanosarcina acetivorans (strain ATCC 35395 / DSM 2834 / JCM 12185 / C2A)).